Here is a 472-residue protein sequence, read N- to C-terminus: Ribosomal protein uS12 methylthiotransferase RimO (472 aa).

In terms of domain architecture, MTTase N-terminal spans 22–133 (PSVAFAHLGC…IVDVLKRVEA (112 aa)). The [4Fe-4S] cluster site is built by cysteine 31, cysteine 67, cysteine 96, cysteine 171, cysteine 175, and cysteine 178. Residues 157–386 (TTDQAVAYLK…MALQQPISAE (230 aa)) enclose the Radical SAM core domain. In terms of domain architecture, TRAM spans 389 to 460 (QRWVGRTIDV…VYDLTGQLVD (72 aa)).

It belongs to the methylthiotransferase family. RimO subfamily. [4Fe-4S] cluster serves as cofactor.

Its subcellular location is the cytoplasm. The catalysed reaction is L-aspartate(89)-[ribosomal protein uS12]-hydrogen + (sulfur carrier)-SH + AH2 + 2 S-adenosyl-L-methionine = 3-methylsulfanyl-L-aspartate(89)-[ribosomal protein uS12]-hydrogen + (sulfur carrier)-H + 5'-deoxyadenosine + L-methionine + A + S-adenosyl-L-homocysteine + 2 H(+). Its function is as follows. Catalyzes the methylthiolation of an aspartic acid residue of ribosomal protein uS12. The polypeptide is Ribosomal protein uS12 methylthiotransferase RimO (Prochlorococcus marinus (strain MIT 9303)).